The sequence spans 584 residues: Pentalenolactone D synthase (584 aa).

FAD is bound by residues 55–56, 77–78, 85–86, 97–98, Tyr-103, Val-147, and Met-486; these read IG, DG, TW, and DV.

Belongs to the FAD-binding monooxygenase family. FAD serves as cofactor.

It carries out the reaction 1-deoxy-11-oxopentalenate + NADPH + O2 + H(+) = pentalenolactone D + NADP(+) + H2O. The protein operates within antibiotic biosynthesis; pentalenolactone biosynthesis. Functionally, catalyzes the flavin-dependent Baeyer-Villiger oxidation of 1-deoxy-11-oxopentalenic acid to pentalenolactone D in the biosynthesis of pentalenolactone antibiotic. The polypeptide is Pentalenolactone D synthase (penE) (Streptomyces exfoliatus (Streptomyces hydrogenans)).